The following is an 893-amino-acid chain: Valine--tRNA ligase (893 aa).

A 'HIGH' region motif is present at residues 57–67 (PNVTGTLHMGH). Positions 545 to 549 (KMSKS) match the 'KMSKS' region motif. Lysine 548 provides a ligand contact to ATP. Residues 821 to 855 (TSGSVDLEAERKRLEKDLAAAQKELATTEGKLGNE) are a coiled coil.

This sequence belongs to the class-I aminoacyl-tRNA synthetase family. ValS type 1 subfamily. As to quaternary structure, monomer.

It localises to the cytoplasm. It carries out the reaction tRNA(Val) + L-valine + ATP = L-valyl-tRNA(Val) + AMP + diphosphate. In terms of biological role, catalyzes the attachment of valine to tRNA(Val). As ValRS can inadvertently accommodate and process structurally similar amino acids such as threonine, to avoid such errors, it has a 'posttransfer' editing activity that hydrolyzes mischarged Thr-tRNA(Val) in a tRNA-dependent manner. This is Valine--tRNA ligase from Nocardia farcinica (strain IFM 10152).